Reading from the N-terminus, the 393-residue chain is Nucleoside permease NupC (393 aa).

The next 9 helical transmembrane spans lie at 3 to 23, 32 to 52, 87 to 107, 168 to 188, 191 to 211, 249 to 269, 272 to 292, 334 to 354, and 372 to 392; these read YLIG…ASSG, IVVM…TGIG, TTFF…IGIL, LCAS…MTML, EYVV…ASII, VVVA…NGIF, VFGI…AFLV, AIVS…IIAG, and LKLL…VGLI.

Belongs to the concentrative nucleoside transporter (CNT) (TC 2.A.41) family.

The protein localises to the cell membrane. Functionally, transport of the pyrimidine nucleoside uridine. In Bacillus subtilis (strain 168), this protein is Nucleoside permease NupC.